Here is a 71-residue protein sequence, read N- to C-terminus: Gas vesicle protein A (71 aa).

The interval 12 to 22 (LAEVIDRILDK) is alpha helix 1. The segment at 26 to 34 (VDAWVRVSL) is beta-strand 1. A beta turn region spans residues 35 to 37 (VGI). The tract at residues 38-46 (ELLAIEARI) is beta-strand 2. Residues 51–70 (VETYLKYAEAVGLTQSAAVP) are alpha helix 2.

It belongs to the gas vesicle GvpA family. In terms of assembly, the gas vesicle shell is 2 nm thick and consists of a single layer of this protein. It forms helical ribs nearly perpendicular to the long axis of the vesicle.

It localises to the gas vesicle shell. Its function is as follows. Gas vesicles are hollow, gas filled proteinaceous nanostructures found in some microorganisms. During planktonic growth they allow positioning of the organism at a favorable depth for light or nutrient acquisition. GvpA forms the protein shell. The chain is Gas vesicle protein A from Microchaete diplosiphon (Fremyella diplosiphon).